The sequence spans 72 residues: Galensin (72 aa).

The signal sequence occupies residues 1–22 (MLTLKKSMLLLFFLGLVSVSLA). The propeptide occupies 23–48 (DDKREDEAEEGEDKRAAEEERNVEKR). Position 71 is a phenylalanine amide (Phe-71).

It belongs to the frog skin active peptide (FSAP) family. Brevinin subfamily. As to quaternary structure, homodimer; disulfide-linked. Expressed by the skin glands.

Its subcellular location is the secreted. Its function is as follows. Antibacterial activity against the Gram-positive bacterium M.luteus and the Gram-negative bacterium E.coli. The chain is Galensin from Kassina senegalensis (Senegal running frog).